The sequence spans 476 residues: Aspartyl/glutamyl-tRNA(Asn/Gln) amidotransferase subunit B (476 aa).

This sequence belongs to the GatB/GatE family. GatB subfamily. Heterotrimer of A, B and C subunits.

The catalysed reaction is L-glutamyl-tRNA(Gln) + L-glutamine + ATP + H2O = L-glutaminyl-tRNA(Gln) + L-glutamate + ADP + phosphate + H(+). It carries out the reaction L-aspartyl-tRNA(Asn) + L-glutamine + ATP + H2O = L-asparaginyl-tRNA(Asn) + L-glutamate + ADP + phosphate + 2 H(+). Allows the formation of correctly charged Asn-tRNA(Asn) or Gln-tRNA(Gln) through the transamidation of misacylated Asp-tRNA(Asn) or Glu-tRNA(Gln) in organisms which lack either or both of asparaginyl-tRNA or glutaminyl-tRNA synthetases. The reaction takes place in the presence of glutamine and ATP through an activated phospho-Asp-tRNA(Asn) or phospho-Glu-tRNA(Gln). This Clostridium botulinum (strain Okra / Type B1) protein is Aspartyl/glutamyl-tRNA(Asn/Gln) amidotransferase subunit B.